We begin with the raw amino-acid sequence, 322 residues long: 4-diphosphocytidyl-2-C-methyl-D-erythritol kinase (322 aa).

K25 is a catalytic residue. 110–120 provides a ligand contact to ATP; that stretch reads PVAGGMAGGSA. Residue D152 is part of the active site.

The protein belongs to the GHMP kinase family. IspE subfamily.

It catalyses the reaction 4-CDP-2-C-methyl-D-erythritol + ATP = 4-CDP-2-C-methyl-D-erythritol 2-phosphate + ADP + H(+). Its pathway is isoprenoid biosynthesis; isopentenyl diphosphate biosynthesis via DXP pathway; isopentenyl diphosphate from 1-deoxy-D-xylulose 5-phosphate: step 3/6. In terms of biological role, catalyzes the phosphorylation of the position 2 hydroxy group of 4-diphosphocytidyl-2C-methyl-D-erythritol. This is 4-diphosphocytidyl-2-C-methyl-D-erythritol kinase from Mycolicibacterium gilvum (strain PYR-GCK) (Mycobacterium gilvum (strain PYR-GCK)).